The sequence spans 299 residues: uncharacterized protein (299 aa).

The next 8 membrane-spanning stretches (helical) occupy residues 13 to 33, 36 to 56, 79 to 99, 112 to 132, 151 to 171, 201 to 221, 241 to 261, and 267 to 287; these read ILFL…LHFM, AFVI…FLML, SFGI…VIII, TAIG…ISVI, ITSE…LFFI, FLIL…VILV, YVIL…MLLS, and PPGP…FLII.

This sequence belongs to the ABC-3 integral membrane protein family.

Its subcellular location is the plastid. The protein localises to the cyanelle membrane. This is an uncharacterized protein from Cyanophora paradoxa.